A 357-amino-acid chain; its full sequence is Protein BMRF2 (357 aa).

Residues M1 to G11 are Virion surface-facing. The chain crosses the lipid bilayer at residues A12–A32. Over N33 to H46 the chain is Virion surface. A transmembrane span lies at residues V47–A67. The Virion surface portion of the chain corresponds to K68–A70. A transmembrane helix spans residues V71 to L91. Residues R92 to T98 lie on the Virion surface side of the membrane. At W99–I121 the chain is embedded in the membrane. Over E122–R133 the chain is Virion surface. The chain crosses the lipid bilayer at residues F134–A154. At L155–S158 the chain is on the virion surface side. The segment at A159–A179 is a transmembrane helix. The Virion surface segment spans residues R180–D217. The short motif at R199 to D201 is the Integrin binding site element. Over L218 to H238 the chain traverses the membrane. Topologically, residues A239 to E240 are virion surface. Positions V241–G261 form a transmembrane segment. Over L262 to S267 the chain is Virion surface. A membrane pass occupies residues S268–L288. At H289 to T298 the chain is on the virion surface side. Positions V299 to M319 form a transmembrane segment. Residues R320–R335 lie on the Virion surface side of the membrane. Residues V336–K356 are membrane-embedded. Position 357 (S357) is a topological domain, virion surface.

This sequence belongs to the herpesviridae BMRF2 family. Interacts with BDLF2. Interacts with host beta1 integrin family. Extensively glycosylated by O-linked oligosaccharides.

The protein resides in the virion membrane. Its subcellular location is the host cell membrane. Facilitates virus attachment to oral epithelial cells by binding to host beta1 integrin family. Participates in rearrangement of cellular actin to increase intercellular contacts by binding BDLF2 and thereby promote virus cell-to-cell spreading. The polypeptide is Protein BMRF2 (Homo sapiens (Human)).